Here is a 443-residue protein sequence, read N- to C-terminus: Xaa-Pro dipeptidase (443 aa).

5 residues coordinate Mn(2+): aspartate 246, aspartate 257, histidine 339, glutamate 384, and glutamate 423.

The protein belongs to the peptidase M24B family. Bacterial-type prolidase subfamily. It depends on Mn(2+) as a cofactor.

The catalysed reaction is Xaa-L-Pro dipeptide + H2O = an L-alpha-amino acid + L-proline. Splits dipeptides with a prolyl residue in the C-terminal position. The chain is Xaa-Pro dipeptidase from Shigella flexneri serotype 5b (strain 8401).